Consider the following 275-residue polypeptide: Large ribosomal subunit protein uL2 (275 aa).

The interval 223–275 (VAMNPVDHPHGGGEGRTGEGRVPVSPWGTPAKGYRTRNNKRTDNMIVRRRHSK) is disordered. The span at 229–241 (DHPHGGGEGRTGE) shows a compositional bias: basic and acidic residues.

Belongs to the universal ribosomal protein uL2 family. In terms of assembly, part of the 50S ribosomal subunit. Forms a bridge to the 30S subunit in the 70S ribosome.

Its function is as follows. One of the primary rRNA binding proteins. Required for association of the 30S and 50S subunits to form the 70S ribosome, for tRNA binding and peptide bond formation. It has been suggested to have peptidyltransferase activity; this is somewhat controversial. Makes several contacts with the 16S rRNA in the 70S ribosome. In Laribacter hongkongensis (strain HLHK9), this protein is Large ribosomal subunit protein uL2.